Reading from the N-terminus, the 262-residue chain is MQPTSVGSSGGGDDGGGRGGGGGLSRSGLSRIRSAPATWLEALLEEDEEESLKPNLGLTDLLTGNSNDLPTSRGSFEFPIPVEQGLYQQGGFHRQNSTPADFLSGSDGFIQSFGIQANYDYLSGNIDVSPGSKRSREMEALFSSPEFTSQMKGEQSSGQVPTGVSSMSDMNMENLMEDSVAFRVRAKRGCATHPRSIAERVRRTRISDRIRKLQELVPNMDKQTNTADMLEEAVEYVKVLQRQIQELTEEQKRCTCIPKEEQ.

The segment at 1-29 (MQPTSVGSSGGGDDGGGRGGGGGLSRSGL) is disordered. Gly residues predominate over residues 8–25 (SSGGGDDGGGRGGGGGLS). Residues 190–240 (CATHPRSIAERVRRTRISDRIRKLQELVPNMDKQTNTADMLEEAVEYVKVL) form the bHLH domain.

In terms of assembly, homodimer. In terms of tissue distribution, expressed in flowers.

It localises to the nucleus. The protein is Transcription factor bHLH81 (BHLH81) of Arabidopsis thaliana (Mouse-ear cress).